A 649-amino-acid chain; its full sequence is Putative cystathionine gamma-synthase YML082W (649 aa).

A disordered region spans residues 242 to 273 (NEANHGEDHDGGISGEVDSQEEPHNGLVSTIP). Phosphoserine is present on serine 287. Lysine 451 carries the post-translational modification N6-(pyridoxal phosphate)lysine.

It belongs to the trans-sulfuration enzymes family. MET7 subfamily. It depends on pyridoxal 5'-phosphate as a cofactor.

It carries out the reaction O-succinyl-L-homoserine + L-cysteine = L,L-cystathionine + succinate + H(+). It participates in amino-acid biosynthesis; L-methionine biosynthesis via de novo pathway; L-cystathionine from O-succinyl-L-homoserine: step 1/1. In terms of biological role, catalyzes the formation of L-cystathionine from O-succinyl-L-homoserine (OSHS) and L-cysteine, via a gamma-replacement reaction. In the absence of thiol, catalyzes gamma-elimination to form 2-oxobutanoate, succinate and ammonia. The protein is Putative cystathionine gamma-synthase YML082W of Saccharomyces cerevisiae (strain ATCC 204508 / S288c) (Baker's yeast).